A 189-amino-acid polypeptide reads, in one-letter code: Interferon alpha-1 (189 aa).

A signal peptide spans 1–23; it reads MAPAWSLLLALLLLSCNAICSLG. 2 disulfide bridges follow: cysteine 24–cysteine 122 and cysteine 52–cysteine 162.

This sequence belongs to the alpha/beta interferon family. Interacts with CR2.

Its subcellular location is the secreted. In terms of biological role, produced by macrophages, IFN-alpha have antiviral activities. Interferon stimulates the production of two enzymes: a protein kinase and an oligoadenylate synthetase. This Bos taurus (Bovine) protein is Interferon alpha-1.